The following is an 80-amino-acid chain: MATRNLVASLLCIMYAVHAMNDYLYIVKHVKVCNHDYENYCLNNGTCFTIALDNVSITPFCVCRINYEGSRCQFINLVTY.

A signal peptide spans 1–19; that stretch reads MATRNLVASLLCIMYAVHA. In terms of domain architecture, EGF-like spans 29–73; it reads HVKVCNHDYENYCLNNGTCFTIALDNVSITPFCVCRINYEGSRCQ. Intrachain disulfides connect Cys-33-Cys-47, Cys-41-Cys-61, and Cys-63-Cys-72. Asn-44 and Asn-54 each carry an N-linked (GlcNAc...) asparagine; by host glycan.

The protein localises to the secreted. This is Growth factor from Oryctolagus cuniculus (Rabbit).